A 261-amino-acid chain; its full sequence is Homeobox-leucine zipper protein HOX24 (261 aa).

2 disordered regions span residues 42 to 67 (AAAAGRGGGDGDGGGGGGGGGERKRR) and 160 to 188 (KLNERQDQSGSCDGGGAEGDDDDKRNSVM). Over residues 46-61 (GRGGGDGDGGGGGGGG) the composition is skewed to gly residues. A DNA-binding region (homeobox) is located at residues 61-121 (GGERKRRFTE…NKRARWRSKQ (61 aa)). The leucine-zipper stretch occupies residues 120–164 (KQIEHDYAALRAQYDALHARVESLRQEKLALADQVDELRGKLNER).

The protein belongs to the HD-ZIP homeobox family. Class I subfamily. Expressed in roots and panicles.

The protein localises to the nucleus. Functionally, probable transcription factor. The sequence is that of Homeobox-leucine zipper protein HOX24 (HOX24) from Oryza sativa subsp. japonica (Rice).